Consider the following 506-residue polypeptide: Aldehyde dehydrogenase [NAD(P)+] 2 (506 aa).

The active-site Proton acceptor is the E268. C302 functions as the Nucleophile in the catalytic mechanism.

Belongs to the aldehyde dehydrogenase family.

The protein localises to the cytoplasm. The catalysed reaction is an aldehyde + NAD(+) + H2O = a carboxylate + NADH + 2 H(+). It catalyses the reaction 3-aminopropanal + NAD(+) + H2O = beta-alanine + NADH + 2 H(+). Cytoplasmic aldehyde dehydrogenase involved in ethanol oxidation. Involved in pantothenic acid production through the conversion of 3-aminopropanal to beta-alanine, an intermediate in pantothenic acid (vitamin B5) and coenzyme A (CoA) biosynthesis. This chain is Aldehyde dehydrogenase [NAD(P)+] 2 (ALD3), found in Saccharomyces cerevisiae (strain ATCC 204508 / S288c) (Baker's yeast).